A 123-amino-acid chain; its full sequence is Large ribosomal subunit protein bL12 (123 aa).

The tract at residues 98–123 (KEGVSKEEAEEIKSKLEDAGATVELK) is disordered. Residues 100–115 (GVSKEEAEEIKSKLED) are compositionally biased toward basic and acidic residues.

This sequence belongs to the bacterial ribosomal protein bL12 family. In terms of assembly, homodimer. Part of the ribosomal stalk of the 50S ribosomal subunit. Forms a multimeric L10(L12)X complex, where L10 forms an elongated spine to which 2 to 4 L12 dimers bind in a sequential fashion. Binds GTP-bound translation factors.

Functionally, forms part of the ribosomal stalk which helps the ribosome interact with GTP-bound translation factors. Is thus essential for accurate translation. In Halothermothrix orenii (strain H 168 / OCM 544 / DSM 9562), this protein is Large ribosomal subunit protein bL12.